A 255-amino-acid chain; its full sequence is 5'-nucleotidase SurE (255 aa).

A divalent metal cation-binding residues include aspartate 8, aspartate 9, serine 40, and asparagine 93.

This sequence belongs to the SurE nucleotidase family. A divalent metal cation serves as cofactor.

The protein resides in the cytoplasm. It catalyses the reaction a ribonucleoside 5'-phosphate + H2O = a ribonucleoside + phosphate. Functionally, nucleotidase that shows phosphatase activity on nucleoside 5'-monophosphates. This Rhodopseudomonas palustris (strain BisB5) protein is 5'-nucleotidase SurE.